Reading from the N-terminus, the 731-residue chain is Catalase-peroxidase (731 aa).

A cross-link (tryptophyl-tyrosyl-methioninium (Trp-Tyr) (with M-252)) is located at residues 98–226; sequence WHAAGTYRTA…LAAVQMGLIY (129 aa). The Proton acceptor role is filled by His-99. The tryptophyl-tyrosyl-methioninium (Tyr-Met) (with W-98) cross-link spans 226-252; it reads YVNPEGPDGNPDIVASGHDVIETFGRM. Position 267 (His-267) interacts with heme b.

Belongs to the peroxidase family. Peroxidase/catalase subfamily. In terms of assembly, homodimer or homotetramer. Heme b serves as cofactor. Post-translationally, formation of the three residue Trp-Tyr-Met cross-link is important for the catalase, but not the peroxidase activity of the enzyme.

The enzyme catalyses H2O2 + AH2 = A + 2 H2O. It carries out the reaction 2 H2O2 = O2 + 2 H2O. Its function is as follows. Bifunctional enzyme with both catalase and broad-spectrum peroxidase activity. The sequence is that of Catalase-peroxidase from Ruegeria pomeroyi (strain ATCC 700808 / DSM 15171 / DSS-3) (Silicibacter pomeroyi).